The primary structure comprises 912 residues: Probable dipeptidyl-aminopeptidase B (912 aa).

The segment at 1–74 (MSSALSPEGD…GPFLGPGASL (74 aa)) is disordered. At 1 to 85 (MSSALSPEGD…REPMDRGLRR (85 aa)) the chain is on the cytoplasmic side. Residues 16–27 (DSLSSVSTTSLV) show a composition bias toward low complexity. The segment covering 30 to 50 (RIQEKTEMDADNDKEKDPRAL) has biased composition (basic and acidic residues). Acidic residues predominate over residues 51 to 63 (DDEDPLRDEDDLE). Residues 86–106 (ILIIVAVVFIGGWLAGLGIFI) form a helical; Signal-anchor for type II membrane protein membrane-spanning segment. Residues 107 to 912 (ASGSYHHESD…KRHMVPQALV (806 aa)) are Vacuolar-facing. The N-linked (GlcNAc...) asparagine glycan is linked to N344. Catalysis depends on S749, which acts as the Charge relay system. A glycan (N-linked (GlcNAc...) asparagine) is linked at N808. Active-site charge relay system residues include D826 and H859. Residues 892-912 (PQPQKDPVEKEKRHMVPQALV) are disordered.

The protein belongs to the peptidase S9B family.

The protein resides in the vacuole membrane. The enzyme catalyses Release of an N-terminal dipeptide, Xaa-Yaa-|-Zaa-, from a polypeptide, preferentially when Yaa is Pro, provided Zaa is neither Pro nor hydroxyproline.. In terms of biological role, type IV dipeptidyl-peptidase which removes N-terminal dipeptides sequentially from polypeptides having unsubstituted N-termini provided that the penultimate residue is proline. The polypeptide is Probable dipeptidyl-aminopeptidase B (DAPB) (Fusarium vanettenii (strain ATCC MYA-4622 / CBS 123669 / FGSC 9596 / NRRL 45880 / 77-13-4) (Fusarium solani subsp. pisi)).